The sequence spans 28 residues: Kalata-B12 (28 aa).

The segment at residues 1-28 is a cross-link (cyclopeptide (Gly-Asp)); the sequence is GSLCGDTCFVLGCNDSSCSCNYPICVKD. 3 disulfide bridges follow: cysteine 4-cysteine 18, cysteine 8-cysteine 20, and cysteine 13-cysteine 25.

In terms of processing, this is a cyclic peptide.

Functionally, probably participates in a plant defense mechanism. In Oldenlandia affinis, this protein is Kalata-B12.